We begin with the raw amino-acid sequence, 426 residues long: 3-phosphoshikimate 1-carboxyvinyltransferase (426 aa).

3-phosphoshikimate is bound by residues lysine 22, serine 23, and arginine 27. Lysine 22 serves as a coordination point for phosphoenolpyruvate. Phosphoenolpyruvate-binding residues include glycine 96 and arginine 124. Serine 170, serine 171, glutamine 172, serine 198, aspartate 314, asparagine 337, and lysine 341 together coordinate 3-phosphoshikimate. Residue glutamine 172 coordinates phosphoenolpyruvate. The active-site Proton acceptor is the aspartate 314. Positions 345, 387, and 412 each coordinate phosphoenolpyruvate.

This sequence belongs to the EPSP synthase family. In terms of assembly, monomer.

The protein localises to the cytoplasm. The enzyme catalyses 3-phosphoshikimate + phosphoenolpyruvate = 5-O-(1-carboxyvinyl)-3-phosphoshikimate + phosphate. Its pathway is metabolic intermediate biosynthesis; chorismate biosynthesis; chorismate from D-erythrose 4-phosphate and phosphoenolpyruvate: step 6/7. Catalyzes the transfer of the enolpyruvyl moiety of phosphoenolpyruvate (PEP) to the 5-hydroxyl of shikimate-3-phosphate (S3P) to produce enolpyruvyl shikimate-3-phosphate and inorganic phosphate. This chain is 3-phosphoshikimate 1-carboxyvinyltransferase, found in Vibrio atlanticus (strain LGP32) (Vibrio splendidus (strain Mel32)).